Here is a 103-residue protein sequence, read N- to C-terminus: Large ribosomal subunit protein bL21 (103 aa).

This sequence belongs to the bacterial ribosomal protein bL21 family. As to quaternary structure, part of the 50S ribosomal subunit. Contacts protein L20.

Its function is as follows. This protein binds to 23S rRNA in the presence of protein L20. The chain is Large ribosomal subunit protein bL21 from Clostridium beijerinckii (strain ATCC 51743 / NCIMB 8052) (Clostridium acetobutylicum).